Consider the following 113-residue polypeptide: MNTGRVTFLVVFLVAVSLGPADKEENPMEMQEKTQQGKNYLNFGENLVVPKLEELKAKLVEKESKKSKNSRQKRCIGEGVACDENDPRCWSGLICPKPTLPGIWDKSYYCYKK.

The signal sequence occupies residues 1–21 (MNTGRVTFLVVFLVAVSLGPA). Positions 22 to 74 (DKEENPMEMQEKTQQGKNYLNFGENLVVPKLEELKAKLVEKESKKSKNSRQKR) are excised as a propeptide. 2 disulfide bridges follow: Cys-82/Cys-95 and Cys-89/Cys-110.

Belongs to the neurotoxin 14 (magi-1) family. 01 (HNTX-16) subfamily. In terms of tissue distribution, expressed by the venom gland.

The protein resides in the secreted. In terms of biological role, probable ion channel inhibitor. The sequence is that of U11-theraphotoxin-Hhn1l from Cyriopagopus hainanus (Chinese bird spider).